The following is a 188-amino-acid chain: Elongation factor P (188 aa).

It belongs to the elongation factor P family.

Its subcellular location is the cytoplasm. The protein operates within protein biosynthesis; polypeptide chain elongation. Functionally, involved in peptide bond synthesis. Stimulates efficient translation and peptide-bond synthesis on native or reconstituted 70S ribosomes in vitro. Probably functions indirectly by altering the affinity of the ribosome for aminoacyl-tRNA, thus increasing their reactivity as acceptors for peptidyl transferase. This Wolbachia sp. subsp. Brugia malayi (strain TRS) protein is Elongation factor P.